Consider the following 129-residue polypeptide: Small ribosomal subunit protein uS11 (129 aa).

Belongs to the universal ribosomal protein uS11 family. In terms of assembly, part of the 30S ribosomal subunit.

Located on the platform of the 30S subunit. This chain is Small ribosomal subunit protein uS11, found in Haloarcula marismortui (strain ATCC 43049 / DSM 3752 / JCM 8966 / VKM B-1809) (Halobacterium marismortui).